A 357-amino-acid chain; its full sequence is Tetraacyldisaccharide 4'-kinase (357 aa).

Threonine 54 to threonine 61 provides a ligand contact to ATP.

The protein belongs to the LpxK family.

The enzyme catalyses a lipid A disaccharide + ATP = a lipid IVA + ADP + H(+). It functions in the pathway glycolipid biosynthesis; lipid IV(A) biosynthesis; lipid IV(A) from (3R)-3-hydroxytetradecanoyl-[acyl-carrier-protein] and UDP-N-acetyl-alpha-D-glucosamine: step 6/6. Transfers the gamma-phosphate of ATP to the 4'-position of a tetraacyldisaccharide 1-phosphate intermediate (termed DS-1-P) to form tetraacyldisaccharide 1,4'-bis-phosphate (lipid IVA). The chain is Tetraacyldisaccharide 4'-kinase from Rhizobium leguminosarum bv. trifolii (strain WSM2304).